A 393-amino-acid polypeptide reads, in one-letter code: 1-deoxy-D-xylulose 5-phosphate reductoisomerase (393 aa).

NADPH-binding residues include T10, G11, S12, I13, R37, Q38, and N124. K125 serves as a coordination point for 1-deoxy-D-xylulose 5-phosphate. E126 contacts NADPH. D150 provides a ligand contact to Mn(2+). 1-deoxy-D-xylulose 5-phosphate contacts are provided by S151, E152, S179, and H202. E152 contributes to the Mn(2+) binding site. Residue G208 participates in NADPH binding. Residues S215, N220, K221, and E224 each contribute to the 1-deoxy-D-xylulose 5-phosphate site. Residue E224 coordinates Mn(2+).

The protein belongs to the DXR family. It depends on Mg(2+) as a cofactor. The cofactor is Mn(2+).

The catalysed reaction is 2-C-methyl-D-erythritol 4-phosphate + NADP(+) = 1-deoxy-D-xylulose 5-phosphate + NADPH + H(+). It participates in isoprenoid biosynthesis; isopentenyl diphosphate biosynthesis via DXP pathway; isopentenyl diphosphate from 1-deoxy-D-xylulose 5-phosphate: step 1/6. In terms of biological role, catalyzes the NADPH-dependent rearrangement and reduction of 1-deoxy-D-xylulose-5-phosphate (DXP) to 2-C-methyl-D-erythritol 4-phosphate (MEP). The sequence is that of 1-deoxy-D-xylulose 5-phosphate reductoisomerase from Cupriavidus taiwanensis (strain DSM 17343 / BCRC 17206 / CCUG 44338 / CIP 107171 / LMG 19424 / R1) (Ralstonia taiwanensis (strain LMG 19424)).